Reading from the N-terminus, the 786-residue chain is Keratin, type I cytoskeletal 9 (786 aa).

The segment at 1 to 21 is disordered; sequence MNCRQFLSSHCSRDSSGGGGG. A head region spans residues 1–136; that stretch reads MNCRQFLSSH…SGAGGILGAD (136 aa). Position 52 is a phosphoserine (S52). The segment at 137-172 is coil 1A; the sequence is EKTTMQDLNSRLASYLDKVQALEDANKELESKIREW. In terms of domain architecture, IF rod spans 137-449; sequence EKTTMQDLNS…SLLEGGQEDF (313 aa). The tract at residues 173-191 is linker 1; the sequence is YDKQGSRTFHRDYSPYYDT. Positions 192-283 are coil 1B; the sequence is IEDLKNQIVN…KNHEDEMSQL (92 aa). Positions 284 to 306 are linker 12; that stretch reads TGQNSGDVNVEMNAAPGRDLTKI. Residues 307–445 are coil 2; it reads LNDMREEYER…KTYRSLLEGG (139 aa). The tract at residues 446–760 is tail; sequence QEDFESHESG…GGGSGSKGGS (315 aa). Positions 447–786 are disordered; that stretch reads EDFESHESGQ…DDTQGYHIQY (340 aa). Gly residues-rich tracts occupy residues 460–657 and 664–761; these read GSGG…GGSG and SSSG…GGSG. Residues 762-773 show a composition bias toward low complexity; it reads RSSQVQSSSSKS.

It belongs to the intermediate filament family. As to quaternary structure, heterotetramer of two type I and two type II keratins.

In terms of biological role, may serve an important special function either in the mature palmar and plantar skin tissue or in the morphogenetic program of the formation of these tissues. Plays a role in keratin filament assembly. The chain is Keratin, type I cytoskeletal 9 from Canis lupus familiaris (Dog).